Reading from the N-terminus, the 343-residue chain is Selenide, water dikinase (343 aa).

The active site involves Cys15. Residues Lys18 and 46–48 (NKD) each bind ATP. A Mg(2+)-binding site is contributed by Asp49. ATP is bound by residues Asp66, Asp89, and 137–139 (GHS). Asp89 provides a ligand contact to Mg(2+). Position 225 (Asp225) interacts with Mg(2+).

The protein belongs to the selenophosphate synthase 1 family. Class I subfamily. Homodimer. Mg(2+) is required as a cofactor.

The catalysed reaction is hydrogenselenide + ATP + H2O = selenophosphate + AMP + phosphate + 2 H(+). Its function is as follows. Synthesizes selenophosphate from selenide and ATP. This chain is Selenide, water dikinase, found in Sulfurovum sp. (strain NBC37-1).